The primary structure comprises 312 residues: 2-dehydropantoate 2-reductase (312 aa).

NADP(+) is bound by residues 7–12 (GAGAMG), asparagine 105, and alanine 131. Asparagine 105 lines the substrate pocket. Lysine 187 functions as the Proton donor in the catalytic mechanism. The substrate site is built by asparagine 191, asparagine 195, and serine 260. Glutamate 273 lines the NADP(+) pocket.

Belongs to the ketopantoate reductase family.

It is found in the cytoplasm. It catalyses the reaction (R)-pantoate + NADP(+) = 2-dehydropantoate + NADPH + H(+). It participates in cofactor biosynthesis; (R)-pantothenate biosynthesis; (R)-pantoate from 3-methyl-2-oxobutanoate: step 2/2. Catalyzes the NADPH-dependent reduction of ketopantoate into pantoic acid. In Lactococcus lactis subsp. lactis (strain IL1403) (Streptococcus lactis), this protein is 2-dehydropantoate 2-reductase.